A 201-amino-acid chain; its full sequence is Small ribosomal subunit protein uS4 (201 aa).

The region spanning 91–151 (SRLDNVVYRA…EKSRKMVWFD (61 aa)) is the S4 RNA-binding domain.

Belongs to the universal ribosomal protein uS4 family. In terms of assembly, part of the 30S ribosomal subunit. Contacts protein S5. The interaction surface between S4 and S5 is involved in control of translational fidelity.

Its function is as follows. One of the primary rRNA binding proteins, it binds directly to 16S rRNA where it nucleates assembly of the body of the 30S subunit. Functionally, with S5 and S12 plays an important role in translational accuracy. This is Small ribosomal subunit protein uS4 from Corynebacterium kroppenstedtii (strain DSM 44385 / JCM 11950 / CIP 105744 / CCUG 35717).